The sequence spans 150 residues: Large ribosomal subunit protein uL15 (150 aa).

The protein belongs to the universal ribosomal protein uL15 family. Part of the 50S ribosomal subunit.

Binds to the 23S rRNA. This is Large ribosomal subunit protein uL15 from Anaplasma marginale (strain Florida).